A 71-amino-acid chain; its full sequence is uncharacterized protein (71 aa).

Positions 52–71 are disordered; sequence KEKFERKEDEKSKPKGVRED.

This is an uncharacterized protein from Archaeoglobus fulgidus (strain ATCC 49558 / DSM 4304 / JCM 9628 / NBRC 100126 / VC-16).